A 648-amino-acid polypeptide reads, in one-letter code: Phosphomethylpyrimidine synthase (648 aa).

Residues Asn-253, Met-282, Tyr-311, His-347, 367 to 369, 408 to 411, and Glu-447 contribute to the substrate site; these read SRG and DGLR. His-451 is a binding site for Zn(2+). Tyr-474 is a binding site for substrate. Residue His-515 coordinates Zn(2+). Cys-595, Cys-598, and Cys-603 together coordinate [4Fe-4S] cluster.

This sequence belongs to the ThiC family. As to quaternary structure, homodimer. [4Fe-4S] cluster is required as a cofactor.

It catalyses the reaction 5-amino-1-(5-phospho-beta-D-ribosyl)imidazole + S-adenosyl-L-methionine = 4-amino-2-methyl-5-(phosphooxymethyl)pyrimidine + CO + 5'-deoxyadenosine + formate + L-methionine + 3 H(+). It functions in the pathway cofactor biosynthesis; thiamine diphosphate biosynthesis. Catalyzes the synthesis of the hydroxymethylpyrimidine phosphate (HMP-P) moiety of thiamine from aminoimidazole ribotide (AIR) in a radical S-adenosyl-L-methionine (SAM)-dependent reaction. The protein is Phosphomethylpyrimidine synthase of Burkholderia thailandensis (strain ATCC 700388 / DSM 13276 / CCUG 48851 / CIP 106301 / E264).